Reading from the N-terminus, the 1875-residue chain is Protein MLP1 (1875 aa).

S2 carries the N-acetylserine modification. 2 coiled-coil regions span residues 69 to 487 (ELKA…IQYL) and 531 to 1678 (ERLV…SAES). T337 carries the post-translational modification Phosphothreonine. A Phosphoserine modification is found at S379. Residues 1496–1565 (QPSNINMEEI…EEKVEERIKS (70 aa)) carry the Required for nuclear localization motif. The interval 1641–1689 (KKSFDEGKQQAMMKTTLLERKLAKMESQLSETKQSAESPPKSVNNVQNP) is disordered. A compositionally biased stretch (polar residues) spans 1667–1688 (SQLSETKQSAESPPKSVNNVQN). S1670 and S1710 each carry phosphoserine. A compositionally biased stretch (low complexity) spans 1716–1725 (KLNSKSSSGG). The tract at residues 1716-1875 (KLNSKSSSGG…TDKVNDENSI (160 aa)) is disordered. Positions 1728-1737 (PFTSPSPNKH) are enriched in polar residues. S1733 bears the Phosphoserine mark. A compositionally biased stretch (basic and acidic residues) spans 1738 to 1748 (LQNDNDKRESL). A compositionally biased stretch (polar residues) spans 1787–1801 (TSNNPAQKDSSNRNV). S1803 carries the post-translational modification Phosphoserine. Composition is skewed to basic and acidic residues over residues 1807–1840 (TEKK…GELK) and 1865–1875 (ETDKVNDENSI). The stretch at 1834–1866 (DEVGELKNDEDDTTENINESKKIKTEDEEEKET) forms a coiled coil.

In terms of assembly, component of the nuclear pore complex (NPC). NPC constitutes the exclusive means of nucleocytoplasmic transport. NPCs allow the passive diffusion of ions and small molecules and the active, nuclear transport receptor-mediated bidirectional transport of macromolecules such as proteins, RNAs, ribonucleoparticles (RNPs), and ribosomal subunits across the nuclear envelope. Due to its 8-fold rotational symmetry, all subunits are present with 8 copies or multiples thereof. Interacts with NAB2, a hnRNP required for mRNA export. Interacts with MLP2. Post-translationally, may be phosphorylated by CDC28.

The protein resides in the nucleus. It localises to the nuclear pore complex. Together with the closely related MLP2, involved in the structural and functional organization of perinuclear chromatin. Together with MLP2, associates with the nuclear pore complex and form filamentous structures along the nuclear periphery. Has a role in the localization of Esc1 to nucleolar regions. Together with MLP2, mediates tethering of the some telomeres to the nuclear periphery, probably mediated by YKU70/YKU80 (HDF1/HDF2) heterodimer and show perinuclear location dependent silencing. MLP1 and MLP2 are involved in telomere length regulation but not silencing or telomere anchoring. Recognizes the 5'-splice site of pre-mRNAs and retains unspliced pre-mRNA in the nucleus without affecting splicing itself. The chain is Protein MLP1 (MLP1) from Saccharomyces cerevisiae (strain ATCC 204508 / S288c) (Baker's yeast).